A 375-amino-acid polypeptide reads, in one-letter code: Ribosomal RNA large subunit methyltransferase G (375 aa).

Belongs to the methyltransferase superfamily. RlmG family.

The protein localises to the cytoplasm. It carries out the reaction guanosine(1835) in 23S rRNA + S-adenosyl-L-methionine = N(2)-methylguanosine(1835) in 23S rRNA + S-adenosyl-L-homocysteine + H(+). In terms of biological role, specifically methylates the guanine in position 1835 (m2G1835) of 23S rRNA. This is Ribosomal RNA large subunit methyltransferase G from Stutzerimonas stutzeri (strain A1501) (Pseudomonas stutzeri).